Reading from the N-terminus, the 380-residue chain is 1-deoxy-D-xylulose 5-phosphate reductoisomerase (380 aa).

The NADPH site is built by Thr10, Gly11, Ser12, Ile13, Gly36, Arg37, Asn38, and Asn120. Lys121 provides a ligand contact to 1-deoxy-D-xylulose 5-phosphate. Glu122 serves as a coordination point for NADPH. Asp146 contributes to the Mn(2+) binding site. Residues Ser147, Glu148, Ser172, and His195 each coordinate 1-deoxy-D-xylulose 5-phosphate. Glu148 lines the Mn(2+) pocket. Gly201 contributes to the NADPH binding site. Ser208, Asn213, Lys214, and Glu217 together coordinate 1-deoxy-D-xylulose 5-phosphate. A Mn(2+)-binding site is contributed by Glu217.

Belongs to the DXR family. It depends on Mg(2+) as a cofactor. Requires Mn(2+) as cofactor.

The catalysed reaction is 2-C-methyl-D-erythritol 4-phosphate + NADP(+) = 1-deoxy-D-xylulose 5-phosphate + NADPH + H(+). Its pathway is isoprenoid biosynthesis; isopentenyl diphosphate biosynthesis via DXP pathway; isopentenyl diphosphate from 1-deoxy-D-xylulose 5-phosphate: step 1/6. Catalyzes the NADPH-dependent rearrangement and reduction of 1-deoxy-D-xylulose-5-phosphate (DXP) to 2-C-methyl-D-erythritol 4-phosphate (MEP). The chain is 1-deoxy-D-xylulose 5-phosphate reductoisomerase from Listeria welshimeri serovar 6b (strain ATCC 35897 / DSM 20650 / CCUG 15529 / CIP 8149 / NCTC 11857 / SLCC 5334 / V8).